Consider the following 269-residue polypeptide: Shikimate dehydrogenase (NADP(+)) (269 aa).

Shikimate-binding positions include 17–19 (SKS) and threonine 64. The active-site Proton acceptor is lysine 68. Glutamate 80 is an NADP(+) binding site. Shikimate is bound by residues asparagine 89 and aspartate 105. NADP(+) is bound by residues 130–134 (GAGGA), 154–159 (NRTRAK), and methionine 213. Tyrosine 215 contacts shikimate. Glycine 237 lines the NADP(+) pocket.

This sequence belongs to the shikimate dehydrogenase family. As to quaternary structure, homodimer.

It carries out the reaction shikimate + NADP(+) = 3-dehydroshikimate + NADPH + H(+). The protein operates within metabolic intermediate biosynthesis; chorismate biosynthesis; chorismate from D-erythrose 4-phosphate and phosphoenolpyruvate: step 4/7. In terms of biological role, involved in the biosynthesis of the chorismate, which leads to the biosynthesis of aromatic amino acids. Catalyzes the reversible NADPH linked reduction of 3-dehydroshikimate (DHSA) to yield shikimate (SA). This chain is Shikimate dehydrogenase (NADP(+)), found in Neisseria meningitidis serogroup B (strain ATCC BAA-335 / MC58).